A 293-amino-acid chain; its full sequence is ATP synthase subunit gamma, mitochondrial (293 aa).

A mitochondrion-targeting transit peptide spans 1–21; it reads MFALRTAARPAARSVGATRNY.

As to quaternary structure, F-type ATP synthases have 2 components, the catalytic core F(1) and the membrane-embedded component F(0), linked together by a central stalk and a peripheral stalk. The central stalk, also called rotor shaft, is often seen as part of F(1). The peripheral stalk is seen as part of F(0). F(0) contains the membrane channel next to the rotor. F-type ATP synthases form dimers but each monomer functions independently in ATP generation. The dimer consists of 17 different polypeptides: ATP1 (subunit alpha, 3 molecules per monomer, part of F(1)), ATP2 (subunit beta, 3 copies per monomer, part of F(1)), ATP3 (subunit gamma, part of the central stalk), ATP4 (subunit b, part of the peripheral stalk), ATP5/OSCP (subunit 5/OSCP, part of the peripheral stalk), ATP6 (subunit a, part of the peripheral stalk), ATP7 (subunit d, part of the peripheral stalk), ATP8 (subunit 8, part of the peripheral stalk), OLI1 (subunit c, part of the rotor, 10 molecules per monomer), ATP14 (subunit h, part of the peripheral stalk), ATP15 (subunit epsilon, part of the central stalk), ATP16 (subunit delta, part of the central stalk), ATP17 (subunit f, part of the peripheral stalk), ATP18 (subunit i/j, part of the peripheral stalk), ATP19 (subunit k, dimer-specific, at interface between monomers), ATP20 (subunit g, at interface between monomers), TIM11 (subunit e, at interface between monomers).

The protein resides in the mitochondrion inner membrane. In terms of biological role, mitochondrial membrane ATP synthase (F(1)F(0) ATP synthase or Complex V) produces ATP from ADP in the presence of a proton gradient across the membrane which is generated by electron transport complexes of the respiratory chain. F-type ATP synthases consist of two structural domains, F(1) - containing the extramembraneous catalytic core, and F(0) - containing the membrane proton channel, linked together by a central stalk and a peripheral stalk. During catalysis, ATP synthesis in the catalytic domain of F(1) is coupled via a rotary mechanism of the central stalk subunits to proton translocation. Part of the complex F(1) domain and the central stalk which is part of the complex rotary element. The gamma/ATP3 subunit protrudes into the catalytic domain formed of alpha/ATP1(3)beta/ATP2(3). Rotation of the central stalk against the surrounding alpha/ATP1(3)beta/ATP2(3) subunits leads to hydrolysis of ATP in three separate catalytic sites on the beta/ATP2 subunits. This Yarrowia lipolytica (strain CLIB 122 / E 150) (Yeast) protein is ATP synthase subunit gamma, mitochondrial.